The primary structure comprises 416 residues: Zinc finger protein 92 homolog (416 aa).

Positions 14-85 (VSFEDVSVYF…DIPRTWATAG (72 aa)) constitute a KRAB domain. The segment at 86 to 125 (LHIGDRTQSKTSTSTQKHSGRQLPGADPQGGKEGQAARSS) is disordered. 8 C2H2-type zinc fingers span residues 152-174 (YLCQ…RIIH), 180-202 (YACP…QRIH), 208-230 (YACP…QVIH), 236-258 (FACG…ARVH), 264-286 (YACP…QRTH), 292-314 (YACG…QRSH), 320-342 (FACR…RRVH), and 348-370 (YECS…QAVH). Residues 368–416 (AVHGARRPAKAETARRLAGPGSTGPGSAVAATSPPRPSTAARPSRPSRR) are disordered. Low complexity predominate over residues 394-416 (SAVAATSPPRPSTAARPSRPSRR).

The protein belongs to the krueppel C2H2-type zinc-finger protein family.

It is found in the nucleus. In terms of biological role, KRAB domain-containing zinc-finger protein that represses B1/Alu SINE transposable elements and modulates the transcription of nearby genes in a tissue-specific manner. It regulates glucose homeostasis and lipid metabolism by modulating the expression of the endocrine cell-defining transcription factor, MAFB, in pancreatic islets and, the fat metabolism regulator, ACACB, in adipose tissue and muscle. This is Zinc finger protein 92 homolog (ZFP92) from Homo sapiens (Human).